We begin with the raw amino-acid sequence, 430 residues long: Serine/threonine-protein kinase Sgk1 (430 aa).

The segment at 1 to 60 is necessary for localization to the mitochondria; it reads MTVKTEAARSTLTYSRMRGMVAILIAFMKQRRMGLNDFIQKLANNSYACKHPEVQSYLKI. A disordered region spans residues 66–92; that stretch reads PELMNANPSPPPSPSQQINLGPSSNPH. Ser74 carries the phosphoserine modification. Ser78 is subject to Phosphoserine; by MAPK7. Polar residues predominate over residues 81–91; that stretch reads QQINLGPSSNP. One can recognise a Protein kinase domain in the interval 98 to 354; that stretch reads FHFLKVIGKG…FMEIKSHIFF (257 aa). ATP is bound by residues 104–112 and Lys127; that span reads IGKGSFGKV. Positions 131–141 match the Nuclear localization signal motif; it reads KKAILKKKEEK. The active-site Proton acceptor is the Asp222. Phosphothreonine; by PDPK1 is present on Thr256. Residues 355-430 enclose the AGC-kinase C-terminal domain; sequence SLINWDDLIN…SYAPPMDSFL (76 aa). A Phosphothreonine; by PKA modification is found at Thr368. Phosphoserine occurs at positions 396, 400, and 421.

The protein belongs to the protein kinase superfamily. AGC Ser/Thr protein kinase family. As to quaternary structure, homodimer; disulfide-linked. Forms a trimeric complex with FBXW7 and NOTCH1. Interacts with MAPK3/ERK1, MAPK1/ERK2, MAP2K1/MEK1, MAP2K2/MEK2, NEDD4, NEDD4L, MAPK7, CREB1, SLC9A3R2/NHERF2 and KCNJ1/ROMK1. Associates with the mammalian target of rapamycin complex 2 (mTORC2) via an interaction with MAPKAP1/SIN1. Interacts with MAPT/TAU. Regulated by phosphorylation. Activated by phosphorylation on Ser-421 by mTORC2, transforming it into a substrate for PDPK1 which phosphorylates it on Thr-256. Phosphorylation on Ser-396 and Ser-400 are also essential for its activity. Phosphorylation on Ser-78 by MAPK7 is required for growth factor-induced cell cycle progression. Post-translationally, ubiquitinated by NEDD4L; which promotes proteasomal degradation. Ubiquitinated by SYVN1 at the endoplasmic reticulum; which promotes rapid proteasomal degradation and maintains a high turnover rate in resting cells. Expressed in most tissues with highest levels in the ovary, thymus and lung. In the kidney, expressed within glomeruli of the cortex, at low levels in outer medulla and moderate levels in inner medulla and papilla.

The protein resides in the cytoplasm. Its subcellular location is the nucleus. The protein localises to the endoplasmic reticulum membrane. It is found in the cell membrane. It localises to the mitochondrion. It carries out the reaction L-seryl-[protein] + ATP = O-phospho-L-seryl-[protein] + ADP + H(+). It catalyses the reaction L-threonyl-[protein] + ATP = O-phospho-L-threonyl-[protein] + ADP + H(+). With respect to regulation, two specific sites, one in the kinase domain (Thr-256) and the other in the C-terminal regulatory region (Ser-421), need to be phosphorylated for its full activation. Phosphorylation at Ser-396 and Ser-400 are also essential for its activity. Activated by WNK1, WNK2, WNK3 and WNK4. In terms of biological role, serine/threonine-protein kinase which is involved in the regulation of a wide variety of ion channels, membrane transporters, cellular enzymes, transcription factors, neuronal excitability, cell growth, proliferation, survival, migration and apoptosis. Plays an important role in cellular stress response. Contributes to regulation of renal Na(+) retention, renal K(+) elimination, salt appetite, gastric acid secretion, intestinal Na(+)/H(+) exchange and nutrient transport, insulin-dependent salt sensitivity of blood pressure, salt sensitivity of peripheral glucose uptake, cardiac repolarization and memory consolidation. Up-regulates Na(+) channels: SCNN1A/ENAC, SCN5A and ASIC1/ACCN2, K(+) channels: KCNJ1/ROMK1, KCNA1-5, KCNQ1-5 and KCNE1, epithelial Ca(2+) channels: TRPV5 and TRPV6, chloride channels: BSND, CLCN2 and CFTR, glutamate transporters: SLC1A3/EAAT1, SLC1A2 /EAAT2, SLC1A1/EAAT3, SLC1A6/EAAT4 and SLC1A7/EAAT5, amino acid transporters: SLC1A5/ASCT2, SLC38A1/SN1 and SLC6A19, creatine transporter: SLC6A8, Na(+)/dicarboxylate cotransporter: SLC13A2/NADC1, Na(+)-dependent phosphate cotransporter: SLC34A2/NAPI-2B, glutamate receptor: GRIK2/GLUR6. Up-regulates carriers: SLC9A3/NHE3, SLC12A1/NKCC2, SLC12A3/NCC, SLC5A3/SMIT, SLC2A1/GLUT1, SLC5A1/SGLT1 and SLC15A2/PEPT2. Regulates enzymes: GSK3A/B, PMM2 and Na(+)/K(+) ATPase, and transcription factors: CTNNB1 and nuclear factor NF-kappa-B. Stimulates sodium transport into epithelial cells by enhancing the stability and expression of SCNN1A/ENAC. This is achieved by phosphorylating the NEDD4L ubiquitin E3 ligase, promoting its interaction with 14-3-3 proteins, thereby preventing it from binding to SCNN1A/ENAC and targeting it for degradation. Regulates store-operated Ca(+2) entry (SOCE) by stimulating ORAI1 and STIM1. Regulates KCNJ1/ROMK1 directly via its phosphorylation or indirectly via increased interaction with SLC9A3R2/NHERF2. Phosphorylates MDM2 and activates MDM2-dependent ubiquitination of p53/TP53. Phosphorylates SLC2A4/GLUT4 and up-regulates its activity. Phosphorylates APBB1/FE65 and promotes its localization to the nucleus. Phosphorylates FBXW7 and plays an inhibitory role in the NOTCH1 signaling. Phosphorylates FOXO1 resulting in its relocalization from the nucleus to the cytoplasm. Phosphorylates FOXO3, promoting its exit from the nucleus and interference with FOXO3-dependent transcription. Phosphorylates BRAF and MAP3K3/MEKK3 and inhibits their activity. Phosphorylates SLC9A3/NHE3 in response to dexamethasone, resulting in its activation and increased localization at the cell membrane. Phosphorylates CREB1. Necessary for vascular remodeling during angiogenesis. Phosphorylates MAPT/TAU and mediates microtubule depolymerization and neurite formation in hippocampal neurons. Phosphorylates MAPK1/ERK2 and activates it by enhancing its interaction with MAP2K1/MEK1 and MAP2K2/MEK2. May also play an important role in the development of particular groups of neurons in the postnatal brain. The sequence is that of Serine/threonine-protein kinase Sgk1 (Sgk1) from Rattus norvegicus (Rat).